Reading from the N-terminus, the 304-residue chain is Acetylglutamate kinase (304 aa).

Substrate is bound by residues 82–83, R104, and N197; that span reads GG.

The protein belongs to the acetylglutamate kinase family. ArgB subfamily.

Its subcellular location is the cytoplasm. The enzyme catalyses N-acetyl-L-glutamate + ATP = N-acetyl-L-glutamyl 5-phosphate + ADP. It participates in amino-acid biosynthesis; L-arginine biosynthesis; N(2)-acetyl-L-ornithine from L-glutamate: step 2/4. Catalyzes the ATP-dependent phosphorylation of N-acetyl-L-glutamate. The sequence is that of Acetylglutamate kinase from Prochlorococcus marinus (strain SARG / CCMP1375 / SS120).